Reading from the N-terminus, the 212-residue chain is Peptide methionine sulfoxide reductase MsrA (212 aa).

The active site involves cysteine 52.

It belongs to the MsrA Met sulfoxide reductase family.

The catalysed reaction is L-methionyl-[protein] + [thioredoxin]-disulfide + H2O = L-methionyl-(S)-S-oxide-[protein] + [thioredoxin]-dithiol. It carries out the reaction [thioredoxin]-disulfide + L-methionine + H2O = L-methionine (S)-S-oxide + [thioredoxin]-dithiol. Has an important function as a repair enzyme for proteins that have been inactivated by oxidation. Catalyzes the reversible oxidation-reduction of methionine sulfoxide in proteins to methionine. In Yersinia pseudotuberculosis serotype O:1b (strain IP 31758), this protein is Peptide methionine sulfoxide reductase MsrA.